We begin with the raw amino-acid sequence, 1463 residues long: Kinesin-like protein KIF15 (1463 aa).

One can recognise a Kinesin motor domain in the interval 18-354 (AIKVFVRVRP…LKFARRAKMI (337 aa)). 99–106 (GQTGSGKT) serves as a coordination point for ATP. The interval 387–424 (AEGSIPRGPSESGDSQMSNSSTESNGPVSGQQSGSSSS) is disordered. Residues 398–414 (SGDSQMSNSSTESNGPV) are compositionally biased toward polar residues. The span at 415–424 (SGQQSGSSSS) shows a compositional bias: low complexity. Coiled coils occupy residues 436 to 517 (SLRD…LEHN) and 586 to 646 (TSTL…QGMK). Disordered regions lie at residues 686–720 (AGEETPGGPGFAGLSDNGSPLRSHSTNSLPPSGDI), 1335–1356 (FKEKEDIKSKLEEEREEKSKLT), and 1409–1444 (QLGKAQSDSEQMKRDYEALQKRLTSSSAEPPEEAGA). Over residues 701 to 715 (DNGSPLRSHSTNSLP) the composition is skewed to polar residues. Over residues 1418 to 1428 (EQMKRDYEALQ) the composition is skewed to basic and acidic residues.

Belongs to the TRAFAC class myosin-kinesin ATPase superfamily. Kinesin family. KLP2 subfamily. In terms of assembly, homodimer.

The protein localises to the cytoplasm. It localises to the cytoskeleton. The protein resides in the spindle. Its function is as follows. Plus-end directed kinesin-like motor enzyme involved in mitotic spindle assembly. Plays a role in positioning spindle poles during mitosis, specifically at prometaphase. This is Kinesin-like protein KIF15 (KIF15) from Strongylocentrotus purpuratus (Purple sea urchin).